Here is a 292-residue protein sequence, read N- to C-terminus: Ribosomal RNA small subunit methyltransferase A (292 aa).

S-adenosyl-L-methionine contacts are provided by Asn29, Leu31, Gly56, Glu77, Asp102, and Asn127.

The protein belongs to the class I-like SAM-binding methyltransferase superfamily. rRNA adenine N(6)-methyltransferase family. RsmA subfamily.

The protein localises to the cytoplasm. It carries out the reaction adenosine(1518)/adenosine(1519) in 16S rRNA + 4 S-adenosyl-L-methionine = N(6)-dimethyladenosine(1518)/N(6)-dimethyladenosine(1519) in 16S rRNA + 4 S-adenosyl-L-homocysteine + 4 H(+). Functionally, specifically dimethylates two adjacent adenosines (A1518 and A1519) in the loop of a conserved hairpin near the 3'-end of 16S rRNA in the 30S particle. May play a critical role in biogenesis of 30S subunits. The protein is Ribosomal RNA small subunit methyltransferase A of Bacillus licheniformis (strain ATCC 14580 / DSM 13 / JCM 2505 / CCUG 7422 / NBRC 12200 / NCIMB 9375 / NCTC 10341 / NRRL NRS-1264 / Gibson 46).